A 175-amino-acid polypeptide reads, in one-letter code: Endothelin-2 (175 aa).

A signal peptide spans Met-1–Gly-21. The propeptide occupies Gln-22–Phe-43. Disulfide bonds link Cys-46–Cys-60 and Cys-48–Cys-56. Positions Val-67–Arg-175 are excised as a propeptide. Positions Cys-93–His-108 are endothelin-like.

The protein belongs to the endothelin/sarafotoxin family.

The protein resides in the secreted. Functionally, vasoconstrictor. The protein is Endothelin-2 (Edn2) of Mus musculus (Mouse).